The chain runs to 300 residues: Glycerol-3-phosphate dehydrogenase [NAD(P)+] (300 aa).

NADPH-binding residues include Trp11, Lys33, and Lys79. Sn-glycerol 3-phosphate is bound by residues Lys79, Gly107, and Ser109. Residue Ala111 coordinates NADPH. 5 residues coordinate sn-glycerol 3-phosphate: Lys161, Asp214, Ser224, Arg225, and Asn226. Catalysis depends on Lys161, which acts as the Proton acceptor. Position 225 (Arg225) interacts with NADPH. NADPH is bound by residues Val249 and Glu251.

It belongs to the NAD-dependent glycerol-3-phosphate dehydrogenase family.

It is found in the cytoplasm. The enzyme catalyses sn-glycerol 3-phosphate + NAD(+) = dihydroxyacetone phosphate + NADH + H(+). It carries out the reaction sn-glycerol 3-phosphate + NADP(+) = dihydroxyacetone phosphate + NADPH + H(+). It participates in membrane lipid metabolism; glycerophospholipid metabolism. In terms of biological role, catalyzes the reduction of the glycolytic intermediate dihydroxyacetone phosphate (DHAP) to sn-glycerol 3-phosphate (G3P), the key precursor for phospholipid synthesis. In Campylobacter lari (strain RM2100 / D67 / ATCC BAA-1060), this protein is Glycerol-3-phosphate dehydrogenase [NAD(P)+].